A 300-amino-acid chain; its full sequence is Protease HtpX homolog (300 aa).

Helical transmembrane passes span 7 to 24 (GILM…GALI) and 29 to 46 (GAII…FTFW). Position 130 (H130) interacts with Zn(2+). Residue E131 is part of the active site. H134 is a binding site for Zn(2+). Helical transmembrane passes span 145 to 165 (VTAT…FFGG) and 174 to 194 (PMGL…AGLV). E203 is a binding site for Zn(2+).

This sequence belongs to the peptidase M48B family. Requires Zn(2+) as cofactor.

It localises to the cell inner membrane. In Cereibacter sphaeroides (strain ATCC 17029 / ATH 2.4.9) (Rhodobacter sphaeroides), this protein is Protease HtpX homolog.